Here is a 352-residue protein sequence, read N- to C-terminus: Probable RNA methyltransferase CV_2253 (352 aa).

The Proton acceptor role is filled by Glu91. Positions 94-320 (LLPRDGLCVS…TKVRDSAGQD (227 aa)) constitute a Radical SAM core domain. A disulfide bond links Cys101 and Cys325. [4Fe-4S] cluster is bound by residues Cys108, Cys112, and Cys115. Residues 153–154 (GE), Ser183, 206–208 (SLH), and Asn282 each bind S-adenosyl-L-methionine. The S-methylcysteine intermediate role is filled by Cys325.

It belongs to the radical SAM superfamily. RlmN family. [4Fe-4S] cluster is required as a cofactor.

It localises to the cytoplasm. The protein is Probable RNA methyltransferase CV_2253 of Chromobacterium violaceum (strain ATCC 12472 / DSM 30191 / JCM 1249 / CCUG 213 / NBRC 12614 / NCIMB 9131 / NCTC 9757 / MK).